The primary structure comprises 257 residues: Ribosomal RNA small subunit methyltransferase A (257 aa).

6 residues coordinate S-adenosyl-L-methionine: Asn-12, Leu-14, Gly-39, Glu-60, Asp-85, and Asn-105.

This sequence belongs to the class I-like SAM-binding methyltransferase superfamily. rRNA adenine N(6)-methyltransferase family. RsmA subfamily.

The protein localises to the cytoplasm. It catalyses the reaction adenosine(1518)/adenosine(1519) in 16S rRNA + 4 S-adenosyl-L-methionine = N(6)-dimethyladenosine(1518)/N(6)-dimethyladenosine(1519) in 16S rRNA + 4 S-adenosyl-L-homocysteine + 4 H(+). Functionally, specifically dimethylates two adjacent adenosines (A1518 and A1519) in the loop of a conserved hairpin near the 3'-end of 16S rRNA in the 30S particle. May play a critical role in biogenesis of 30S subunits. The chain is Ribosomal RNA small subunit methyltransferase A from Methylococcus capsulatus (strain ATCC 33009 / NCIMB 11132 / Bath).